The primary structure comprises 162 residues: NADH-quinone oxidoreductase subunit I 2 (162 aa).

4Fe-4S ferredoxin-type domains lie at 52–82 (LRRY…IEAG) and 93–122 (VRYD…EGPN). The [4Fe-4S] cluster site is built by C62, C65, C68, C72, C102, C105, C108, and C112.

The protein belongs to the complex I 23 kDa subunit family. NDH-1 is composed of 14 different subunits. Subunits NuoA, H, J, K, L, M, N constitute the membrane sector of the complex. It depends on [4Fe-4S] cluster as a cofactor.

It localises to the cell inner membrane. The enzyme catalyses a quinone + NADH + 5 H(+)(in) = a quinol + NAD(+) + 4 H(+)(out). Its function is as follows. NDH-1 shuttles electrons from NADH, via FMN and iron-sulfur (Fe-S) centers, to quinones in the respiratory chain. The immediate electron acceptor for the enzyme in this species is believed to be ubiquinone. Couples the redox reaction to proton translocation (for every two electrons transferred, four hydrogen ions are translocated across the cytoplasmic membrane), and thus conserves the redox energy in a proton gradient. This is NADH-quinone oxidoreductase subunit I 2 from Rhodopseudomonas palustris (strain HaA2).